Reading from the N-terminus, the 593-residue chain is Aspartate--tRNA(Asp/Asn) ligase (593 aa).

Position 173 (Glu173) interacts with L-aspartate. Residues 197-200 (QLFK) form an aspartate region. Arg219 is an L-aspartate binding site. Residues 219–221 (RDE) and Gln228 contribute to the ATP site. His451 lines the L-aspartate pocket. Glu485 lines the ATP pocket. Arg492 contributes to the L-aspartate binding site. 537–540 (GIDR) is a binding site for ATP.

This sequence belongs to the class-II aminoacyl-tRNA synthetase family. Type 1 subfamily. Homodimer.

Its subcellular location is the cytoplasm. The enzyme catalyses tRNA(Asx) + L-aspartate + ATP = L-aspartyl-tRNA(Asx) + AMP + diphosphate. Functionally, aspartyl-tRNA synthetase with relaxed tRNA specificity since it is able to aspartylate not only its cognate tRNA(Asp) but also tRNA(Asn). Reaction proceeds in two steps: L-aspartate is first activated by ATP to form Asp-AMP and then transferred to the acceptor end of tRNA(Asp/Asn). In Legionella pneumophila (strain Paris), this protein is Aspartate--tRNA(Asp/Asn) ligase.